The sequence spans 352 residues: N-acetyl-gamma-glutamyl-phosphate reductase (352 aa).

Residue Cys156 is part of the active site.

It belongs to the NAGSA dehydrogenase family. Type 1 subfamily.

The protein resides in the cytoplasm. It catalyses the reaction N-acetyl-L-glutamate 5-semialdehyde + phosphate + NADP(+) = N-acetyl-L-glutamyl 5-phosphate + NADPH + H(+). It participates in amino-acid biosynthesis; L-arginine biosynthesis; N(2)-acetyl-L-ornithine from L-glutamate: step 3/4. Its function is as follows. Catalyzes the NADPH-dependent reduction of N-acetyl-5-glutamyl phosphate to yield N-acetyl-L-glutamate 5-semialdehyde. This chain is N-acetyl-gamma-glutamyl-phosphate reductase, found in Rhodospirillum rubrum (strain ATCC 11170 / ATH 1.1.1 / DSM 467 / LMG 4362 / NCIMB 8255 / S1).